The following is a 340-amino-acid chain: MRFIDKAKIHVKAGDGGNGCVAFRREKYVRMGGPSGGNGGKGGDVIIMADKSLKTLMDFRYKKHFKAENGQHGSGNNRHGRNGKDLIIKVPVGTVVKDAETGEILADLIYDGQKVVVAKGGRGGRGNAAFKTSTNQAPDYAEEGQPGEERWIELELKLIADIGIIGFPNAGKSTLISVLSKAKPKIADYPFTTLTPVLGVLQLDYGKSVVIADIPGLIEGASKGAGLGHEFLRHIERTKALIHMIDISDQRERDPIEAFEIINKELEKYSPELVKKPQIVVGNKIDMLSDRSLIEKLKKEFSKRGYPFVAVSLVTKEGLDQLIKLIAEVYEKISEKELIK.

Residues 1-159 form the Obg domain; sequence MRFIDKAKIH…RWIELELKLI (159 aa). Residues 160 to 331 enclose the OBG-type G domain; that stretch reads ADIGIIGFPN…LIKLIAEVYE (172 aa). GTP contacts are provided by residues 166–173, 191–195, 213–216, 283–286, and 312–314; these read GFPNAGKS, FTTLT, DIPG, NKID, and SLV. Mg(2+) is bound by residues Ser-173 and Thr-193.

The protein belongs to the TRAFAC class OBG-HflX-like GTPase superfamily. OBG GTPase family. In terms of assembly, monomer. It depends on Mg(2+) as a cofactor.

Its subcellular location is the cytoplasm. An essential GTPase which binds GTP, GDP and possibly (p)ppGpp with moderate affinity, with high nucleotide exchange rates and a fairly low GTP hydrolysis rate. Plays a role in control of the cell cycle, stress response, ribosome biogenesis and in those bacteria that undergo differentiation, in morphogenesis control. This chain is GTPase Obg, found in Persephonella marina (strain DSM 14350 / EX-H1).